The primary structure comprises 81 residues: Large ribosomal subunit protein bL31B (81 aa).

This sequence belongs to the bacterial ribosomal protein bL31 family. Type B subfamily. As to quaternary structure, part of the 50S ribosomal subunit.

This Listeria innocua serovar 6a (strain ATCC BAA-680 / CLIP 11262) protein is Large ribosomal subunit protein bL31B.